The chain runs to 301 residues: Recombination-associated protein RdgC (301 aa).

This sequence belongs to the RdgC family.

It localises to the cytoplasm. Its subcellular location is the nucleoid. May be involved in recombination. In Xanthomonas oryzae pv. oryzae (strain MAFF 311018), this protein is Recombination-associated protein RdgC.